The primary structure comprises 442 residues: Coiled-coil domain-containing protein 112 (442 aa).

2 coiled-coil regions span residues 23-116 (LEEL…RRIE) and 217-249 (LEEKKKESIQNWKTKKQQKKEEILKLKEKVDTV). Disordered stretches follow at residues 245–272 (KVDTVPLPSQSKAEDSPKQREEQRKKQK), 289–312 (KLASQLREEEEKERKQQRERQRQS), and 392–442 (EKVE…RQGI). Composition is skewed to basic and acidic residues over residues 256–268 (KAEDSPKQREEQR) and 294–310 (LREEEEKERKQQRERQR). Positions 281–400 (RKSLEMSAKL…KEKVENNVSR (120 aa)) form a coiled coil.

The protein resides in the cytoplasm. It localises to the cytoskeleton. The protein localises to the microtubule organizing center. Its subcellular location is the centrosome. It is found in the centriolar satellite. The sequence is that of Coiled-coil domain-containing protein 112 (Ccdc112) from Mus musculus (Mouse).